We begin with the raw amino-acid sequence, 325 residues long: Probable cell division protein WhiA (325 aa).

Positions 280-313 (SLKELGSMLKNPLGKSGVNHRLRKIDKIAEELRK) form a DNA-binding region, H-T-H motif.

Belongs to the WhiA family.

Its function is as follows. Involved in cell division and chromosome segregation. This Caldicellulosiruptor saccharolyticus (strain ATCC 43494 / DSM 8903 / Tp8T 6331) protein is Probable cell division protein WhiA.